The chain runs to 315 residues: Cytochrome f (315 aa).

Positions 1–30 are cleaved as a signal peptide; sequence MRTFLKFSTLVSKGVLVLVCSFFLTASSNA. Heme-binding residues include Y31, C51, C54, and H55. The helical transmembrane segment at 281–300 threads the bilayer; sequence IQGLLVFFLFVLLAQVFLVL.

Belongs to the cytochrome f family. As to quaternary structure, the 4 large subunits of the cytochrome b6-f complex are cytochrome b6, subunit IV (17 kDa polypeptide, petD), cytochrome f and the Rieske protein, while the 4 small subunits are PetG, PetL, PetM and PetN. The complex functions as a dimer. It depends on heme as a cofactor.

It localises to the plastid. It is found in the chloroplast thylakoid membrane. Functionally, component of the cytochrome b6-f complex, which mediates electron transfer between photosystem II (PSII) and photosystem I (PSI), cyclic electron flow around PSI, and state transitions. The polypeptide is Cytochrome f (petA) (Chlorella vulgaris (Green alga)).